The following is a 360-amino-acid chain: Type 2 DNA topoisomerase 6 subunit A (360 aa).

The region spanning 3–140 (EIERRCLRAL…FHIRPEEDGA (138 aa)) is the Topo IIA-type catalytic domain. The active-site O-(5'-phospho-DNA)-tyrosine intermediate is the tyrosine 97. Positions 193 and 245 each coordinate Mg(2+).

The protein belongs to the TOP6A family. Homodimer. Heterotetramer of two Top6A and two Top6B chains. It depends on Mg(2+) as a cofactor.

It carries out the reaction ATP-dependent breakage, passage and rejoining of double-stranded DNA.. In terms of biological role, relaxes both positive and negative superturns and exhibits a strong decatenase activity. The sequence is that of Type 2 DNA topoisomerase 6 subunit A from Archaeoglobus fulgidus (strain ATCC 49558 / DSM 4304 / JCM 9628 / NBRC 100126 / VC-16).